An 833-amino-acid chain; its full sequence is Zinc phosphodiesterase ELAC protein 2 homolog (833 aa).

Residues 1-19 (MLGAIARKTVENRILVSRH) constitute a mitochondrion transit peptide. The segment covering 624–646 (LTPPGSPGGPPGKRPRLPSPHLP) has biased composition (pro residues). Residues 624–652 (LTPPGSPGGPPGKRPRLPSPHLPPSRDVL) form a disordered region.

The protein belongs to the RNase Z family. In terms of assembly, homodimer. Zn(2+) serves as cofactor. In terms of tissue distribution, highly expressed in the germline.

The protein resides in the mitochondrion. Its subcellular location is the nucleus. The catalysed reaction is Endonucleolytic cleavage of RNA, removing extra 3' nucleotides from tRNA precursor, generating 3' termini of tRNAs. A 3'-hydroxy group is left at the tRNA terminus and a 5'-phosphoryl group is left at the trailer molecule.. Functionally, zinc phosphodiesterase, which displays some tRNA 3'-processing endonuclease activity. Probably involved in tRNA maturation, by removing a 3'-trailer from precursor tRNA. Involved in germline proliferation. May be required for both mitosis and meiosis in germ cells. In terms of biological role, does not regulate the mitochondrial unfolded protein response following mitochondrial stress. Plays a role in mitochondrial unfolded protein response. Upon mitochondrial stress is exported from the nucleus where its tRNA endonuclease activity is negatively regulated. In response to mitochondrial stress, might be involved in activating a transcriptional response in an ATFS-1- and DVE-1-dependent manner. May play a role in negatively regulating the mitochondrial membrane potential. The protein is Zinc phosphodiesterase ELAC protein 2 homolog of Caenorhabditis elegans.